A 512-amino-acid polypeptide reads, in one-letter code: ATP synthase subunit alpha (512 aa).

169–176 (GDRQTGKT) is an ATP binding site.

Belongs to the ATPase alpha/beta chains family. As to quaternary structure, F-type ATPases have 2 components, CF(1) - the catalytic core - and CF(0) - the membrane proton channel. CF(1) has five subunits: alpha(3), beta(3), gamma(1), delta(1), epsilon(1). CF(0) has four main subunits: a(1), b(1), b'(1) and c(9-12).

Its subcellular location is the cell inner membrane. The catalysed reaction is ATP + H2O + 4 H(+)(in) = ADP + phosphate + 5 H(+)(out). Produces ATP from ADP in the presence of a proton gradient across the membrane. The alpha chain is a regulatory subunit. The sequence is that of ATP synthase subunit alpha from Cereibacter sphaeroides (strain ATCC 17025 / ATH 2.4.3) (Rhodobacter sphaeroides).